The chain runs to 426 residues: Glutamyl-tRNA reductase (426 aa).

Substrate-binding positions include 49 to 52, serine 107, 112 to 114, and glutamine 118; these read TCNR and EPQ. Residue cysteine 50 is the Nucleophile of the active site. Position 187–192 (187–192) interacts with NADP(+); sequence GAGETI.

The protein belongs to the glutamyl-tRNA reductase family. Homodimer.

The enzyme catalyses (S)-4-amino-5-oxopentanoate + tRNA(Glu) + NADP(+) = L-glutamyl-tRNA(Glu) + NADPH + H(+). It functions in the pathway porphyrin-containing compound metabolism; protoporphyrin-IX biosynthesis; 5-aminolevulinate from L-glutamyl-tRNA(Glu): step 1/2. Its function is as follows. Catalyzes the NADPH-dependent reduction of glutamyl-tRNA(Glu) to glutamate 1-semialdehyde (GSA). This chain is Glutamyl-tRNA reductase, found in Ectopseudomonas mendocina (strain ymp) (Pseudomonas mendocina).